Consider the following 375-residue polypeptide: Chaperone protein DnaJ (375 aa).

A J domain is found at 6 to 71 (DYYEVLGVPK…EKRRQYDQFG (66 aa)). Residues 138-220 (GTTKKIDVTL…CYGTGYISSK (83 aa)) form a CR-type zinc finger. The Zn(2+) site is built by cysteine 151, cysteine 154, cysteine 168, cysteine 171, cysteine 194, cysteine 197, cysteine 208, and cysteine 211. 4 CXXCXGXG motif repeats span residues 151 to 158 (CSSCHGTG), 168 to 175 (CSKCGGRG), 194 to 201 (CPDCHGTG), and 208 to 215 (CPDCYGTG).

The protein belongs to the DnaJ family. As to quaternary structure, homodimer. The cofactor is Zn(2+).

It is found in the cytoplasm. Functionally, participates actively in the response to hyperosmotic and heat shock by preventing the aggregation of stress-denatured proteins and by disaggregating proteins, also in an autonomous, DnaK-independent fashion. Unfolded proteins bind initially to DnaJ; upon interaction with the DnaJ-bound protein, DnaK hydrolyzes its bound ATP, resulting in the formation of a stable complex. GrpE releases ADP from DnaK; ATP binding to DnaK triggers the release of the substrate protein, thus completing the reaction cycle. Several rounds of ATP-dependent interactions between DnaJ, DnaK and GrpE are required for fully efficient folding. Also involved, together with DnaK and GrpE, in the DNA replication of plasmids through activation of initiation proteins. This chain is Chaperone protein DnaJ, found in Lachnospira eligens (strain ATCC 27750 / DSM 3376 / VPI C15-48 / C15-B4) (Eubacterium eligens).